Consider the following 264-residue polypeptide: Thymidylate synthase (264 aa).

Residue arginine 21 coordinates dUMP. Histidine 51 is a binding site for (6R)-5,10-methylene-5,6,7,8-tetrahydrofolate. Residue 126 to 127 coordinates dUMP; the sequence is RR. The active-site Nucleophile is the cysteine 146. Residues 166–169, asparagine 177, and 207–209 contribute to the dUMP site; these read RSCD and HLY. Aspartate 169 is a binding site for (6R)-5,10-methylene-5,6,7,8-tetrahydrofolate. A (6R)-5,10-methylene-5,6,7,8-tetrahydrofolate-binding site is contributed by alanine 263.

It belongs to the thymidylate synthase family. Bacterial-type ThyA subfamily. In terms of assembly, homodimer.

The protein resides in the cytoplasm. The catalysed reaction is dUMP + (6R)-5,10-methylene-5,6,7,8-tetrahydrofolate = 7,8-dihydrofolate + dTMP. It participates in pyrimidine metabolism; dTTP biosynthesis. Functionally, catalyzes the reductive methylation of 2'-deoxyuridine-5'-monophosphate (dUMP) to 2'-deoxythymidine-5'-monophosphate (dTMP) while utilizing 5,10-methylenetetrahydrofolate (mTHF) as the methyl donor and reductant in the reaction, yielding dihydrofolate (DHF) as a by-product. This enzymatic reaction provides an intracellular de novo source of dTMP, an essential precursor for DNA biosynthesis. This chain is Thymidylate synthase, found in Salmonella arizonae (strain ATCC BAA-731 / CDC346-86 / RSK2980).